Consider the following 83-residue polypeptide: MQNDAGEFVDLYVPRKCSASNRIIGAKDHASIQINIAEVDKVTGRFNGQFKTYAICGAIRRMGEADDSLLRLAKNDSIVSKNI.

It belongs to the eukaryotic ribosomal protein eS21 family. Component of the 40S small ribosomal subunit.

The protein localises to the cytoplasm. It is found in the cytosol. The protein resides in the rough endoplasmic reticulum. Its function is as follows. Component of the small ribosomal subunit. The ribosome is a large ribonucleoprotein complex responsible for the synthesis of proteins in the cell. The chain is Small ribosomal subunit protein eS21 (rps21) from Ictalurus punctatus (Channel catfish).